A 359-amino-acid polypeptide reads, in one-letter code: Serine/threonine-protein kinase SAPK7 (359 aa).

The 257-residue stretch at 4 to 260 (YELLKDIGAG…IREIRNHPWF (257 aa)) folds into the Protein kinase domain. Residues 10–18 (IGAGNFGVA) and Lys-33 contribute to the ATP site. The Proton acceptor role is filled by Asp-123. The disordered stretch occupies residues 299–359 (EEARTPPRSS…VHASGEFQLS (61 aa)). Over residues 331-343 (EEQEEEEDAEDEY) the composition is skewed to acidic residues.

The protein belongs to the protein kinase superfamily. Ser/Thr protein kinase family. In terms of processing, may be phosphorylated. In terms of tissue distribution, weakly expressed in roots. Expressed in roots of young seedlings.

It is found in the cytoplasm. The protein localises to the nucleus. It carries out the reaction L-seryl-[protein] + ATP = O-phospho-L-seryl-[protein] + ADP + H(+). The catalysed reaction is L-threonyl-[protein] + ATP = O-phospho-L-threonyl-[protein] + ADP + H(+). Activated by hyperosmotic stress. Functionally, may play a role in signal transduction of hyperosmotic response. The polypeptide is Serine/threonine-protein kinase SAPK7 (SAPK7) (Oryza sativa subsp. japonica (Rice)).